The chain runs to 904 residues: MSYIKSNLELYQQYTAMAPKLLARISKLLMICQNAGISVPKGIRNIFEFTWEELISDPSVPTPSDILGLEVSFGAPLVVLMEPTFVQVPTLKKPLPPPPPAPPRPVLLATTGAAKRSTLSPTMARQVRTHQETLNRFQQQSIHLLTELLRLKMKAMVESMSVGANPLDITRRFVEASQLLHLNAKEMAFNCLISTAGRSGYSSGQLWKESLANMSAIGVNSPYQLIYHSSTACLSFSLSAGKEAKKKIGKSRTTEDVSMPPLHRGVGTPANSLEFSDPCPEAREKLQELCRHIEAERATWKGRNISYPMILRNYKAKMPSHLMLARKGDSQTPGLHYPPTAGAQTLSPTSHPSSANHHFSQHCQEGKAPKKAFKFHYTFYDGSSFVYYPSGNVAVCQIPTCCRGRTITCLFNDIPGFSLLALFNTEGQGCVHYNLKTSCPYVLILDEEGGTTNDQQGYVVHKWSWTSRTETLLSLEYKVNEEMKLKVLGQDSITVTFTSLNETVTLTVSANNCPHGMAYDKRLNRRISNMDDKVYKMSRALAEIKKRFQKTVTQFINSILLAAGLFTIEYPTKKEEEEFVRFKMRSRTHPERLPKLSLYSGESLLRSQSGHLESSIAETLKDEPESAPVSPVRKTTKIHTKAKVTSRGKAREGRSPTRWAALPSDCPLVLRKLMLKEDTRAGCKCLVKAPLVSDVELERFLLAPRDPSQVLVFGIISSQNYTSTGQLQWLLNTLYNHQQRGRGSPCIQCRYDSYRLLQYDLDSPLQEDPPLMVKKNSVVQGMILMFAGGKLIFGGRVLNGYGLSKQNLLKQIFRSQQDYKMGYFLPDDYKFSVPNSVLSLEDSESVKKAESEDIQGSSSSLALEDYVEKELSLEAEKTREPEVELHPLSRDSKITSWKKQASKK.

2 disordered regions span residues 247-275 (KIGK…SLEF) and 328-360 (GDSQ…HHFS). Polar residues predominate over residues 342 to 360 (GAQTLSPTSHPSSANHHFS). Residues 778 to 798 (VVQGMILMFAGGKLIFGGRVL) form a helical membrane-spanning segment.

It is found in the membrane. This is an uncharacterized protein from Homo sapiens (Human).